The primary structure comprises 1978 residues: Dedicator of cytokinesis protein 4 (1978 aa).

Residues 6 to 67 (EHEKYGVVIA…PSSYVHLKNA (62 aa)) enclose the SH3 domain. At Y167 the chain carries Phosphotyrosine. T193 bears the Phosphothreonine mark. A C2 DOCK-type domain is found at 401 to 574 (RNDLYITVER…ESFWITSFLC (174 aa)). The 407-residue stretch at 1199 to 1605 (KTELNKEEMY…FGIQEFPACI (407 aa)) folds into the DOCKER domain. A phosphoserine mark is found at S1608, S1616, S1623, S1627, S1629, and S1640. Disordered regions lie at residues 1657 to 1738 (SQAS…IYPT) and 1751 to 1978 (IGDG…VSQL). The span at 1681-1712 (PSPSTSSLSSTHSASPNVTSSAPSSARASPLL) shows a compositional bias: low complexity. S1778 bears the Phosphoserine mark. An SH3-binding motif is present at residues 1797–1803 (PPVPPRP). The span at 1804–1818 (TQTASPARHTTSVSP) shows a compositional bias: polar residues. Low complexity predominate over residues 1842 to 1872 (SPGLSSNSPVLSGSYSSGISSLSRCSTSETS). The segment covering 1873 to 1882 (GFENQANEQS) has biased composition (polar residues). Positions 1885 to 1895 (VPVPVPVPVPV) are enriched in pro residues. Over residues 1953-1966 (SHLENGTRRTEPGP) the composition is skewed to basic and acidic residues.

Belongs to the DOCK family. In terms of assembly, interacts with nucleotide-free Rap1; functions as a guanine nucleotide exchange factor (GEF) for Rap1. Interacts (via DOCKER domain) with RAC1; functions as a guanine nucleotide exchange factor (GEF) for RAC1. Interacts with the SH3 domain of CRK. Interacts with FASLG. Interacts with ELMO2 and EPHA2; mediates activation of RAC1 by EPHA2. Interacts with USH1C (via PDZ 1 domain). As to expression, expressed in inner ear (at protein level).

The protein resides in the cell membrane. It localises to the cytoplasm. It is found in the cytosol. Functionally, functions as a guanine nucleotide exchange factor (GEF) that promotes the exchange of GDP to GTP, converting inactive GDP-bound small GTPases into their active GTP-bound form. Involved in regulation of adherens junction between cells. Plays a role in cell migration. Its function is as follows. Has a higher guanine nucleotide exchange factor activity compared to other isoforms. In Mus musculus (Mouse), this protein is Dedicator of cytokinesis protein 4 (Dock4).